The sequence spans 497 residues: MEMILSISLCLTTLITLLLLRRFLKRTATKVNLPPSPWRLPVIGNLHQLSLHPHRSLRSLSLRYGPLMLLHFGRVPILVVSSGEAAQEVLKTHDHKFANRPRSKAVHGLMNGGRDVVFAPYGEYWRQMKSVCILNLLTNKMVESFEKVREDEVNAMIEKLEKASSSSSSENLSELFITLPSDVTSRVALGRKHSEDETARDLKKRVRQIMELLGEFPIGEYVPILAWIDGIRGFNNKIKEVSRGFSDLMDKVVQEHLEASNDKADFVDILLSIEKDKNSGFQVQRNDIKFMILDMFIGGTSTTSTLLEWTMTELIRSPKSMKKLQDEIRSTIRPHGSYIKEKEVENMKYLKAVIKEVLRLHPSLPMILPRLLSEDVKVKGYNIAAGTEVIINAWAIQRDTAIWGPDAEEFKPERHLDSGLDYHGKNLNYIPFGSGRRICPGINLALGLAEVTVANLVGRFDWRVEAGPNGDQPDLTEAIGIDVCRKFPLIAFPSSVV.

A helical transmembrane segment spans residues 2–20; sequence EMILSISLCLTTLITLLLL. Cys-439 lines the heme pocket.

Belongs to the cytochrome P450 family.

The protein localises to the membrane. It catalyses the reaction (E)-(indol-3-yl)acetaldehyde oxime = (indol-3-yl)acetonitrile + H2O. Its function is as follows. Involved in the biosynthesis of the indole-derived phytoalexin camalexin. Catalyzes the conversion of indole-3-acetaldoxime to indole-3-acetonitrile. Required for resistance to A.brassicicola and B.cinerea. This chain is Indoleacetaldoxime dehydratase (CYP71A13), found in Arabidopsis thaliana (Mouse-ear cress).